The primary structure comprises 170 residues: Ergosterol biosynthetic protein 28 (170 aa).

Helical transmembrane passes span 7 to 27, 116 to 136, and 141 to 161; these read FLPEAKGVLPYYMIILSIISI, TLAYWTYIVAFSHFASELFVF, and FGLPQYFPFALASTSLIWMPL.

Belongs to the ERG28 family. Heterotetramer of ERG25, ERG26, ERG27 and ERG28. ERG28 acts as a scaffold to tether ERG27 and other 4,4-demethylation-related enzymes, forming a demethylation enzyme complex, in the endoplasmic reticulum.

Its subcellular location is the endoplasmic reticulum membrane. It functions in the pathway steroid metabolism; ergosterol biosynthesis. Sterol 24-C-methyltransferase; part of the third module of ergosterol biosynthesis pathway that includes the late steps of the pathway. ERG28 has a role as a scaffold to help anchor the catalytic components of the C-4 demethylation complex ERG25, ERG26 and ERG27 to the endoplasmic reticulum. The third module or late pathway involves the ergosterol synthesis itself through consecutive reactions that mainly occur in the endoplasmic reticulum (ER) membrane. Firstly, the squalene synthase ERG9 catalyzes the condensation of 2 farnesyl pyrophosphate moieties to form squalene, which is the precursor of all steroids. Squalene synthase is crucial for balancing the incorporation of farnesyl diphosphate (FPP) into sterol and nonsterol isoprene synthesis. Secondly, squalene is converted into lanosterol by the consecutive action of the squalene epoxidase ERG1 and the lanosterol synthase ERG7. Then, the delta(24)-sterol C-methyltransferase ERG6 methylates lanosterol at C-24 to produce eburicol. Eburicol is the substrate of the sterol 14-alpha demethylase encoded by CYP51A, CYP51B and CYP51C, to yield 4,4,24-trimethyl ergosta-8,14,24(28)-trienol. CYP51B encodes the enzyme primarily responsible for sterol 14-alpha-demethylation, and plays an essential role in ascospore formation. CYP51A encodes an additional sterol 14-alpha-demethylase, induced on ergosterol depletion and responsible for the intrinsic variation in azole sensitivity. The third CYP51 isoform, CYP51C, does not encode a sterol 14-alpha-demethylase, but is required for full virulence on host wheat ears. The C-14 reductase ERG24 then reduces the C14=C15 double bond which leads to 4,4-dimethylfecosterol. A sequence of further demethylations at C-4, involving the C-4 demethylation complex containing the C-4 methylsterol oxidases ERG25, the sterol-4-alpha-carboxylate 3-dehydrogenase ERG26 and the 3-keto-steroid reductase ERG27, leads to the production of fecosterol via 4-methylfecosterol. ERG28 has a role as a scaffold to help anchor ERG25, ERG26 and ERG27 to the endoplasmic reticulum. The C-8 sterol isomerase ERG2 then catalyzes the reaction which results in unsaturation at C-7 in the B ring of sterols and thus converts fecosterol to episterol. The sterol-C5-desaturases ERG3A and ERG3BB then catalyze the introduction of a C-5 double bond in the B ring to produce 5-dehydroepisterol. The C-22 sterol desaturases ERG5A and ERG5B further convert 5-dehydroepisterol into ergosta-5,7,22,24(28)-tetraen-3beta-ol by forming the C-22(23) double bond in the sterol side chain. Finally, ergosta-5,7,22,24(28)-tetraen-3beta-ol is substrate of the C-24(28) sterol reductase ERG4 to produce ergosterol. The sequence is that of Ergosterol biosynthetic protein 28 from Gibberella zeae (strain ATCC MYA-4620 / CBS 123657 / FGSC 9075 / NRRL 31084 / PH-1) (Wheat head blight fungus).